Consider the following 216-residue polypeptide: ADP-sugar pyrophosphatase (216 aa).

Residue methionine 1 is modified to N-acetylmethionine. 2 positions are modified to phosphoserine: serine 3 and serine 10. Tryptophan 28 provides a ligand contact to substrate. Lysine 42 participates in a covalent cross-link: Glycyl lysine isopeptide (Lys-Gly) (interchain with G-Cter in SUMO2). Threonine 45 carries the post-translational modification Phosphothreonine. Substrate is bound by residues 46–47 and arginine 51; that span reads WE. The Nudix hydrolase domain maps to 57-194; sequence QTADGVAVIP…EEHLTVDARV (138 aa). Tyrosine 74 bears the Phosphotyrosine mark. Arginine 84 serves as a coordination point for substrate. Alanine 96 lines the Mg(2+) pocket. The Nudix box motif lies at 97 to 118; it reads GLIDDGETPEAAALRELEEETG. Leucine 98 lines the substrate pocket. Residues glutamate 112 and glutamate 116 each contribute to the Mg(2+) site. A substrate-binding site is contributed by aspartate 133. Glutamate 163 contacts Mg(2+). N6-acetyllysine occurs at positions 207 and 215.

It belongs to the Nudix hydrolase family. As to quaternary structure, homodimer. Interacts with PARG. Requires Mg(2+) as cofactor. Phosphorylation at Thr-45 is required for homodimer stability; dephosphorylation results in destabilization of the homodimer. Dephosphorylation at Thr-45 promotes the ATP-synthesis activity.

The protein resides in the nucleus. The catalysed reaction is D-ribose 5-phosphate + ATP + H(+) = ADP-D-ribose + diphosphate. It catalyses the reaction ADP-D-ribose + H2O = D-ribose 5-phosphate + AMP + 2 H(+). The enzyme catalyses 8-oxo-dGDP + H2O = 8-oxo-dGMP + phosphate + H(+). Functionally, enzyme that can either act as an ADP-sugar pyrophosphatase in absence of diphosphate or catalyze the synthesis of ATP in presence of diphosphate. In absence of diphosphate, hydrolyzes with similar activities various modified nucleoside diphosphates such as ADP-ribose, ADP-mannose, ADP-glucose, 8-oxo-GDP and 8-oxo-dGDP. Can also hydrolyze other nucleotide sugars with low activity. In presence of diphosphate, mediates the synthesis of ATP in the nucleus by catalyzing the conversion of ADP-ribose to ATP and ribose 5-phosphate. Nuclear ATP synthesis takes place when dephosphorylated at Thr-45. Nuclear ATP generation is required for extensive chromatin remodeling events that are energy-consuming. Does not play a role in U8 snoRNA decapping activity. Binds U8 snoRNA. This is ADP-sugar pyrophosphatase from Pongo abelii (Sumatran orangutan).